The sequence spans 330 residues: RNA polymerase sigma factor RpoS (330 aa).

A sigma-70 factor domain-1 region spans residues 56–89 (DATQLYLGEIGYSPLLTAEEEVYFARRALRGDVA). The sigma-70 factor domain-2 stretch occupies residues 94-164 (MIESNLRLVV…ERAIMNQTRT (71 aa)). The short motif at 118–121 (DLIE) is the Interaction with polymerase core subunit RpoC element. The interval 174 to 249 (ELNVYLRTAR…DEKENGPEDT (76 aa)) is sigma-70 factor domain-3. The segment at 262 to 315 (WLFELNAKQREVLARRFGLLGYEAATLEDVGREIGLTRERVRQIQVEGLRRLRE) is sigma-70 factor domain-4. The H-T-H motif DNA-binding region spans 288-307 (LEDVGREIGLTRERVRQIQV).

Belongs to the sigma-70 factor family. RpoS subfamily. As to quaternary structure, interacts with the RNA polymerase core enzyme.

The protein resides in the cytoplasm. Functionally, sigma factors are initiation factors that promote the attachment of RNA polymerase to specific initiation sites and are then released. This sigma factor is the master transcriptional regulator of the stationary phase and the general stress response. In Salmonella dublin, this protein is RNA polymerase sigma factor RpoS.